A 62-amino-acid polypeptide reads, in one-letter code: DNA-directed RNA polymerase subunit Rpo10 (62 aa).

The Zn(2+) site is built by C6, C9, C43, and C44.

It belongs to the archaeal Rpo10/eukaryotic RPB10 RNA polymerase subunit family. In terms of assembly, part of the RNA polymerase complex. It depends on Zn(2+) as a cofactor.

It is found in the cytoplasm. The enzyme catalyses RNA(n) + a ribonucleoside 5'-triphosphate = RNA(n+1) + diphosphate. In terms of biological role, DNA-dependent RNA polymerase (RNAP) catalyzes the transcription of DNA into RNA using the four ribonucleoside triphosphates as substrates. This is DNA-directed RNA polymerase subunit Rpo10 from Methanoregula boonei (strain DSM 21154 / JCM 14090 / 6A8).